The following is a 1477-amino-acid chain: Inositol hexakisphosphate and diphosphoinositol-pentakisphosphate kinase 1 (1477 aa).

The segment at 27–47 (TRGLGMRPEESDSELLEDEED) is disordered. The segment covering 37–47 (SDSELLEDEED) has biased composition (acidic residues). 64-65 (KK) is a substrate binding site. Residues Arg-145, Lys-198, His-205, Arg-224, 248-251 (EEFM), and 257-259 (DVK) each bind ATP. A substrate-binding site is contributed by 224-225 (RK). The substrate site is built by Lys-259 and Arg-273. Residues Ser-275, Asp-320, and 332-334 (DVN) contribute to the ATP site. Position 337–340 (337–340 (SFVK)) interacts with substrate. A polyphosphoinositide-binding domain region spans residues 382–453 (PTTSGTMMEL…VLDITRLLLA (72 aa)). The tract at residues 910-1016 (KGVEEEGSAP…PTEMKQSGLG (107 aa)) is disordered. Phosphoserine is present on residues Ser-940 and Ser-983. A compositionally biased stretch (polar residues) spans 1001–1016 (FSSSRPPTEMKQSGLG). Phosphoserine occurs at positions 1033, 1069, 1141, and 1148. Disordered stretches follow at residues 1131–1248 (HSNQ…KPCQ) and 1438–1477 (REEV…SFSH). Low complexity predominate over residues 1164-1182 (SSGPSSTVSSAGPSSPTAV). Over residues 1446 to 1460 (CPPSNANPQSQSLAP) the composition is skewed to polar residues.

It belongs to the histidine acid phosphatase family. VIP1 subfamily.

It is found in the cytoplasm. Its subcellular location is the cytosol. The protein resides in the cell membrane. The enzyme catalyses 1D-myo-inositol hexakisphosphate + ATP = 1-diphospho-1D-myo-inositol 2,3,4,5,6-pentakisphosphate + ADP. The catalysed reaction is 5-diphospho-1D-myo-inositol 1,2,3,4,6-pentakisphosphate + ATP + H(+) = 1,5-bis(diphospho)-1D-myo-inositol 2,3,4,6-tetrakisphosphate + ADP. Functionally, bifunctional inositol kinase that acts in concert with the IP6K kinases IP6K1, IP6K2 and IP6K3 to synthesize the diphosphate group-containing inositol pyrophosphates diphosphoinositol pentakisphosphate, PP-InsP5, and bis-diphosphoinositol tetrakisphosphate, (PP)2-InsP4. PP-InsP5 and (PP)2-InsP4, also respectively called InsP7 and InsP8, regulate a variety of cellular processes, including apoptosis, vesicle trafficking, cytoskeletal dynamics, exocytosis, insulin signaling and neutrophil activation. Phosphorylates inositol hexakisphosphate (InsP6) at position 1 to produce PP-InsP5 which is in turn phosphorylated by IP6Ks to produce (PP)2-InsP4. Alternatively, phosphorylates PP-InsP5 at position 1, produced by IP6Ks from InsP6, to produce (PP)2-InsP4. Activated when cells are exposed to hyperosmotic stress. In Bos taurus (Bovine), this protein is Inositol hexakisphosphate and diphosphoinositol-pentakisphosphate kinase 1.